Reading from the N-terminus, the 372-residue chain is Cell division protein FtsZ 1 (372 aa).

GTP-binding positions include 51 to 55, 138 to 140, Glu169, Arg173, and Asp216; these read GAGCN and GTG. Positions 350-360 are enriched in acidic residues; that stretch reads PEEETPLETPE. The interval 350 to 372 is disordered; that stretch reads PEEETPLETPEESPSIEISIPEL. Low complexity predominate over residues 361 to 372; the sequence is ESPSIEISIPEL.

This sequence belongs to the FtsZ family. In terms of assembly, homodimer. Polymerizes to form a dynamic ring structure in a strictly GTP-dependent manner. Interacts directly with several other division proteins.

It localises to the cytoplasm. In terms of biological role, essential cell division protein that forms a contractile ring structure (Z ring) at the future cell division site. The regulation of the ring assembly controls the timing and the location of cell division. One of the functions of the FtsZ ring is to recruit other cell division proteins to the septum to produce a new cell wall between the dividing cells. Binds GTP and shows GTPase activity. The chain is Cell division protein FtsZ 1 from Pyrococcus furiosus (strain ATCC 43587 / DSM 3638 / JCM 8422 / Vc1).